A 513-amino-acid polypeptide reads, in one-letter code: Maturase K (513 aa).

Belongs to the intron maturase 2 family. MatK subfamily.

It localises to the plastid. The protein localises to the chloroplast. Functionally, usually encoded in the trnK tRNA gene intron. Probably assists in splicing its own and other chloroplast group II introns. This is Maturase K from Zea mays (Maize).